Here is a 434-residue protein sequence, read N- to C-terminus: Glutamate/glutamine/aspartate/asparagine transport system permease protein BztC (434 aa).

The next 10 membrane-spanning stretches (helical) occupy residues 41–61 (LTVF…PWLL), 113–133 (LFVT…DALP), 135–155 (KLIW…WGGP), 156–176 (IWGP…FTAL), 180–200 (LGVP…WLYA), 227–247 (FLLA…LGIL), 272–292 (GVPL…FLPP), 298–318 (LILR…AEVI), 360–380 (IVSS…VGLF), and 398–418 (GTYW…NFSM). The ABC transmembrane type-1 domain maps to 227-422 (FLLALVIGVT…LFNFSMSRYS (196 aa)).

Belongs to the binding-protein-dependent transport system permease family. HisMQ subfamily. In terms of assembly, bztB and BztC form a heterodimer which can form a membrane complex with a homodimer of BztD.

The protein resides in the cell inner membrane. Its function is as follows. Part of a binding-protein-dependent transport system for glutamate, glutamine, aspartate and asparagine. Probably responsible for the translocation of the substrate across the membrane. The protein is Glutamate/glutamine/aspartate/asparagine transport system permease protein BztC (bztC) of Rhodobacter capsulatus (strain ATCC BAA-309 / NBRC 16581 / SB1003).